The chain runs to 519 residues: Maturase K (519 aa).

The protein belongs to the intron maturase 2 family. MatK subfamily.

Its subcellular location is the plastid. The protein resides in the chloroplast. Its function is as follows. Usually encoded in the trnK tRNA gene intron. Probably assists in splicing its own and other chloroplast group II introns. The protein is Maturase K of Dioscorea elephantipes (Elephant's foot yam).